Here is a 345-residue protein sequence, read N- to C-terminus: uncharacterized protein (345 aa).

It belongs to the cycloisomerase 2 family.

This is an uncharacterized protein from Staphylococcus saprophyticus subsp. saprophyticus (strain ATCC 15305 / DSM 20229 / NCIMB 8711 / NCTC 7292 / S-41).